The primary structure comprises 367 residues: 3-dehydroquinate synthase (367 aa).

Residues 108–112 (GVIGD), 132–133 (TT), K145, and K154 each bind NAD(+). E187, H249, and H267 together coordinate Zn(2+).

It belongs to the sugar phosphate cyclases superfamily. Dehydroquinate synthase family. Co(2+) serves as cofactor. Requires Zn(2+) as cofactor. It depends on NAD(+) as a cofactor.

It is found in the cytoplasm. The enzyme catalyses 7-phospho-2-dehydro-3-deoxy-D-arabino-heptonate = 3-dehydroquinate + phosphate. Its pathway is metabolic intermediate biosynthesis; chorismate biosynthesis; chorismate from D-erythrose 4-phosphate and phosphoenolpyruvate: step 2/7. Catalyzes the conversion of 3-deoxy-D-arabino-heptulosonate 7-phosphate (DAHP) to dehydroquinate (DHQ). The chain is 3-dehydroquinate synthase from Paracoccus denitrificans (strain Pd 1222).